Reading from the N-terminus, the 302-residue chain is ATP synthase gamma chain, sodium ion specific (302 aa).

This sequence belongs to the ATPase gamma chain family. In terms of assembly, F-type ATPases have 2 components, CF(1) - the catalytic core - and CF(0) - the membrane proton channel. CF(1) has five subunits: alpha(3), beta(3), gamma(1), delta(1), epsilon(1). CF(0) has three main subunits: a, b and c.

The protein localises to the cell membrane. With respect to regulation, inhibited by nitrate. Its function is as follows. Produces ATP from ADP in the presence of a proton gradient across the membrane. The gamma chain is believed to be important in regulating ATPase activity and the flow of protons through the CF(0) complex. This is ATP synthase gamma chain, sodium ion specific (atpG) from Acetobacterium woodii (strain ATCC 29683 / DSM 1030 / JCM 2381 / KCTC 1655 / WB1).